A 194-amino-acid chain; its full sequence is Large ribosomal subunit protein bL12m (194 aa).

The N-terminal 33 residues, 1-33 (MSLRILAKRSSSIWMKTRVTPALISPITITTRF), are a transit peptide targeting the mitochondrion. N-linked (GlcNAc...) asparagine glycosylation occurs at Asn-34. Positions 101-120 (AGNVPSSTGEAGSGAEEEAK) are disordered. A compositionally biased stretch (low complexity) spans 105 to 114 (PSSTGEAGSG).

This sequence belongs to the bacterial ribosomal protein bL12 family. In terms of assembly, component of the mitochondrial large ribosomal subunit (mt-LSU). Mature yeast 74S mitochondrial ribosomes consist of a small (37S) and a large (54S) subunit. The 37S small subunit contains a 15S ribosomal RNA (15S mt-rRNA) and 34 different proteins. The 54S large subunit contains a 21S rRNA (21S mt-rRNA) and 46 different proteins. N-glycosylated.

The protein resides in the mitochondrion. Its function is as follows. Component of the mitochondrial ribosome (mitoribosome), a dedicated translation machinery responsible for the synthesis of mitochondrial genome-encoded proteins, including at least some of the essential transmembrane subunits of the mitochondrial respiratory chain. The mitoribosomes are attached to the mitochondrial inner membrane and translation products are cotranslationally integrated into the membrane. This chain is Large ribosomal subunit protein bL12m (MNP1), found in Saccharomyces cerevisiae (strain ATCC 204508 / S288c) (Baker's yeast).